The following is a 542-amino-acid chain: Protein MGF 505-10R (542 aa).

The protein belongs to the asfivirus MGF 505 family.

Plays a role in virus cell tropism, and may be required for efficient virus replication in macrophages. The sequence is that of Protein MGF 505-10R from Ornithodoros (relapsing fever ticks).